Reading from the N-terminus, the 396-residue chain is HVEDPQGDAAQKTDTSHHDQEHSTFNKITPSLAEFAFSLYRQLAHQSNSTNIFFSPVSIATAFAMLSLGTKADTHSEILEGLNFNLTEIPEAQIHEGFQELLHTLNKPDSQLQLTTGNGLFLNKSVKVVDKFLEDVKKLYHSEAFSVNFEDTEEAKKQINNYVEKGTQGKIVDLVKELDRDTVFALVNYIFFKGKWERPFEVEATKEEDFHVDQATTVKVPMMRRLGMFNIYHCEKLSSWVLLMKYLGNATAIFFLPDEGKLQHLENELTHDIITKFLENENRRSANLHLPKLAITGTYDLKTVLGHLGITKVFSNGADLSGVTEDAPLKLSKAVHKAVLTIDEKGTEAAGAMFLEAIPMSIPPEVKFNKPFVFLMIEQNTKSPLFMGKVVNPTQK.

The first 2 residues, 1–2, serve as a signal peptide directing secretion; sequence HV. The interval 1–24 is disordered; that stretch reads HVEDPQGDAAQKTDTSHHDQEHST. Residues 14–24 show a composition bias toward basic and acidic residues; the sequence is DTSHHDQEHST. Ser-16 is modified (phosphoserine). 4 N-linked (GlcNAc...) asparagine glycosylation sites follow: Asn-48, Asn-85, Asn-123, and Asn-249. The interval 351–370 is RCL; that stretch reads GAMFLEAIPMSIPPEVKFNK. A Phosphoserine modification is found at Ser-361.

This sequence belongs to the serpin family. Interacts with CELA2A. Interacts with ERGIC3 and LMAN1/ERGIC53. Interacts with PRSS1/Trypsin. In terms of tissue distribution, plasma.

The protein resides in the secreted. Inhibitor of serine proteases. Its primary target is elastase, but it also has a moderate affinity for plasmin and thrombin. Inhibits trypsin, chymotrypsin and plasminogen activator. This chain is Alpha-1-antitrypsin (SERPINA1), found in Chlorocebus aethiops (Green monkey).